Reading from the N-terminus, the 257-residue chain is MSDLKKAAQKAIELMDLTTLNDDDTDQKVIELCHKAKTPAGNTAAICIYPRFIPIARKTLNELGCEDIKIATVTNFPHGNDDIAIAVLETRAAVAYGADEVDVVFPYRSLMEGNETLGFELVKACKEACGDDAILKVIIESGVLEDPALIRKASELCIDAGADFIKTSTGKVPVNATIEAAEIMMTVISEKNTKVGFKPAGGVRDAAAAGEFLGLAARLLGDDWATPATFRFGASSLLVNLLHTLELGEEAKGPQGY.

The active-site Proton donor/acceptor is D102. Residue K166 is the Schiff-base intermediate with acetaldehyde of the active site. The active-site Proton donor/acceptor is the K198.

It belongs to the DeoC/FbaB aldolase family. DeoC type 2 subfamily.

Its subcellular location is the cytoplasm. The enzyme catalyses 2-deoxy-D-ribose 5-phosphate = D-glyceraldehyde 3-phosphate + acetaldehyde. It participates in carbohydrate degradation; 2-deoxy-D-ribose 1-phosphate degradation; D-glyceraldehyde 3-phosphate and acetaldehyde from 2-deoxy-alpha-D-ribose 1-phosphate: step 2/2. Catalyzes a reversible aldol reaction between acetaldehyde and D-glyceraldehyde 3-phosphate to generate 2-deoxy-D-ribose 5-phosphate. This chain is Deoxyribose-phosphate aldolase, found in Shewanella woodyi (strain ATCC 51908 / MS32).